Consider the following 560-residue polypeptide: Protein yellow (560 aa).

The N-terminal stretch at 1–30 (MHVQDKGGIGALTALSLLLVAVTMVTPTQA) is a signal peptide. N-linked (GlcNAc...) asparagine glycans are attached at residues N153 and N224. The disordered stretch occupies residues 452 to 492 (QYRPVLPQKPQTSWGPSPPSRSYLPSLGASPGGPGQVVSSV). Residues 471–480 (SRSYLPSLGA) show a composition bias toward low complexity.

This sequence belongs to the major royal jelly protein family.

It localises to the secreted. Controls the pigmentation pattern of the adult cuticle and larval mouth parts. This chain is Protein yellow (y), found in Drosophila pseudoobscura pseudoobscura (Fruit fly).